We begin with the raw amino-acid sequence, 120 residues long: Large ribosomal subunit protein bL20 (120 aa).

Belongs to the bacterial ribosomal protein bL20 family.

Its function is as follows. Binds directly to 23S ribosomal RNA and is necessary for the in vitro assembly process of the 50S ribosomal subunit. It is not involved in the protein synthesizing functions of that subunit. This is Large ribosomal subunit protein bL20 from Methylobacillus flagellatus (strain ATCC 51484 / DSM 6875 / VKM B-1610 / KT).